We begin with the raw amino-acid sequence, 969 residues long: Lateral signaling target protein 2 homolog (969 aa).

Residue Lys87 forms a Glycyl lysine isopeptide (Lys-Gly) (interchain with G-Cter in ubiquitin) linkage. Disordered stretches follow at residues 290–323, 336–360, 390–437, and 715–777; these read QDGE…GVEE, SVWK…EEPI, STLL…YHDD, and RSEC…DMSE. Residues 295-310 are compositionally biased toward polar residues; sequence PTSSTNDPSASTGPDS. Positions 336-346 are enriched in basic and acidic residues; sequence SVWKEEEEKQV. Polar residues predominate over residues 391-402; sequence TLLSPPSQNQSP. Low complexity predominate over residues 411 to 423; the sequence is GSSLEGSSATSST. A compositionally biased stretch (basic and acidic residues) spans 715–729; sequence RSECFGKQSKDDNRK. Low complexity-rich tracts occupy residues 732–745 and 756–769; these read SSSQ…VPSS and SLSS…VSSL. The FYVE-type zinc finger occupies 899-959; sequence DEACNSCIAC…VCTHCYMFHV (61 aa). Residues Cys905, Cys908, Cys921, Cys924, Cys929, Cys932, Cys951, and Cys954 each coordinate Zn(2+).

Belongs to the lst-2 family. Post-translationally, monoubiquitination at Lys-87 prevents binding to phosphatidylinositol 3-phosphate (PI3P) and localization to early endosome membranes.

It localises to the cytoplasm. Its subcellular location is the cytosol. The protein localises to the early endosome membrane. Functionally, negative regulator of epidermal growth factor receptor (EGFR) signaling. Acts by promoting EGFR degradation in endosomes when not monoubiquitinated. The protein is Lateral signaling target protein 2 homolog (zfyve28) of Danio rerio (Zebrafish).